We begin with the raw amino-acid sequence, 51 residues long: UPF0181 protein VVA0806 (51 aa).

It belongs to the UPF0181 family.

The protein is UPF0181 protein VVA0806 of Vibrio vulnificus (strain YJ016).